The chain runs to 284 residues: Tryptophan synthase alpha chain (284 aa).

Active-site proton acceptor residues include Glu59 and Asp70.

Belongs to the TrpA family. In terms of assembly, tetramer of two alpha and two beta chains.

The catalysed reaction is (1S,2R)-1-C-(indol-3-yl)glycerol 3-phosphate + L-serine = D-glyceraldehyde 3-phosphate + L-tryptophan + H2O. The protein operates within amino-acid biosynthesis; L-tryptophan biosynthesis; L-tryptophan from chorismate: step 5/5. Functionally, the alpha subunit is responsible for the aldol cleavage of indoleglycerol phosphate to indole and glyceraldehyde 3-phosphate. The protein is Tryptophan synthase alpha chain of Azospirillum brasilense.